The sequence spans 1580 residues: Transcriptional activator GLI3 (1580 aa).

Residue Met1 is modified to N-acetylmethionine. Polar residues-rich tracts occupy residues 1–10 and 58–78; these read MEAQSHSSTT and ITMQ…PSTS. The interval 1 to 79 is disordered; it reads MEAQSHSSTT…KVSEEPSTSS (79 aa). Residue Arg175 is modified to Omega-N-methylarginine. The interval 368-475 is disordered; it reads QSLGSAFGHS…DKDESKQEPE (108 aa). Residues 401–427 show a composition bias toward polar residues; the sequence is NPVQVSSGPSESSQNKPTSESAVSSTG. Residues Lys438 and Lys462 each participate in a glycyl lysine isopeptide (Lys-Gly) (interchain with G-Cter in SUMO2) cross-link. The segment covering 461–474 has biased composition (basic and acidic residues); the sequence is VKEEGDKDESKQEP. C2H2-type zinc fingers lie at residues 480–505, 513–540, 546–570, 576–601, and 607–632; these read TNCH…NNDH, FVCR…MRRH, HKCT…LRSH, YVCE…NRTH, and YVCK…KTVH. Residues 620 to 728 are disordered; that stretch reads DPSSLRKHVK…PISNYSNSGL (109 aa). Basic and acidic residues predominate over residues 632–648; that stretch reads HGPEAHVTKKQRGDIHP. A Phosphoserine modification is found at Ser664. Positions 684-699 are enriched in basic and acidic residues; the sequence is SKREECLQVKTVKAEK. Low complexity predominate over residues 703–726; that stretch reads SQPSPGGQSSCSSQQSPISNYSNS. The interval 745–845 is mediates interaction with DZIP1; the sequence is DETPIMDSTI…VDVTMLNMLN (101 aa). Residue Lys773 forms a Glycyl lysine isopeptide (Lys-Gly) (interchain with G-Cter in ubiquitin) linkage. Lys779 is covalently cross-linked (Glycyl lysine isopeptide (Lys-Gly) (interchain with G-Cter in SUMO2); alternate). Lys779 participates in a covalent cross-link: Glycyl lysine isopeptide (Lys-Gly) (interchain with G-Cter in ubiquitin); alternate. Glycyl lysine isopeptide (Lys-Gly) (interchain with G-Cter in ubiquitin) cross-links involve residues Lys784 and Lys800. A phosphoserine; by PKA mark is found at Ser849, Ser865, Ser877, and Ser907. Over residues 863–882 the composition is skewed to low complexity; that stretch reads RSSGISPCFSSRRSSEASQA. The disordered stretch occupies residues 863 to 918; sequence RSSGISPCFSSRRSSEASQAEGRPQNVSVADSYDPISTDASRRSSEASQSDGLPSL. The span at 908–918 shows a compositional bias: polar residues; the sequence is EASQSDGLPSL. A phosphoserine; by PKA mark is found at Ser980 and Ser1006. The disordered stretch occupies residues 981 to 1042; the sequence is DGGAHGYGRR…PAMATSAEKR (62 aa).

It belongs to the GLI C2H2-type zinc-finger protein family. In terms of assembly, the full-length GLI3 form (GLI3FL) interacts with SUFU and this interaction regulates the formation of either repressor or activator forms of GLI3. Its association with SUFU is regulated by Hh signaling and dissociation of the SUFU-GLI3 interaction requires the presence of the ciliary motor KIF3A. Interacts with KIF7. The activator form of GLI3 (GLI3A) but not the repressor form (GLI3R) can interact with TRPS1. The phosphorylated form interacts with BTRC. Interacts with ZIC1. Interacts with ZIC3 (via C2H2-type domains 3, 4 and 5); the interaction enhances its transcriptional activity. Interacts with WRD11; the interaction associates EMX1 with GLI3. Interacts with DZIP1; retains GLI3 within the cytoplasm. Post-translationally, phosphorylated on multiple sites by protein kinase A (PKA) and phosphorylation by PKA primes further phosphorylation by CK1 and GSK3. Phosphorylated by DYRK2 (in vitro). Phosphorylation is essential for its proteolytic processing. In terms of processing, transcriptional repressor GLI3R, a C-terminally truncated form, is generated from the full-length GLI3 protein (GLI3FL/GLI3-190) through proteolytic processing. This process requires PKA-primed phosphorylation of GLI3, ubiquitination of GLI3 and the presence of BTRC. GLI3FL is complexed with SUFU in the cytoplasm and is maintained in a neutral state. Without the Hh signal, the SUFU-GLI3 complex is recruited to cilia, leading to the efficient processing of GLI3FL into GLI3R. GLI3R formation leads to its dissociation from SUFU, allowing it to translocate into the nucleus, and repress Hh target genes. When Hh signaling is initiated, SUFU dissociates from GLI3FL and this has two consequences. First, GLI3R production is halted. Second, free GLI3FL translocates to the nucleus, where it is phosphorylated, destabilized, and converted to a transcriptional activator (GLI3A). Phosphorylated in vitro by ULK3.

Its subcellular location is the nucleus. The protein localises to the cytoplasm. It localises to the cell projection. It is found in the cilium. Functionally, has a dual function as a transcriptional activator and a repressor of the sonic hedgehog (Shh) pathway, and plays a role in limb development. The full-length GLI3 form (GLI3FL) after phosphorylation and nuclear translocation, acts as an activator (GLI3A) while GLI3R, its C-terminally truncated form, acts as a repressor. A proper balance between the GLI3 activator and the repressor GLI3R, rather than the repressor gradient itself or the activator/repressor ratio gradient, specifies limb digit number and identity. In concert with TRPS1, plays a role in regulating the size of the zone of distal chondrocytes, in restricting the zone of PTHLH expression in distal cells and in activating chondrocyte proliferation. Binds to the minimal GLI-consensus sequence 5'-GGGTGGTC-3'. Plays a role in limb and brain development. This Pan troglodytes (Chimpanzee) protein is Transcriptional activator GLI3 (GLI3).